The sequence spans 45 residues: Enterotoxin (45 aa).

One of 3 components (of 35, 45 and 105 kDa) of the enterotoxin.

One of 3 components required for cytotoxicity (tested in African green monkey Vero cells); the complex is not hemolytic. The chain is Enterotoxin from Bacillus cereus.